Here is a 144-residue protein sequence, read N- to C-terminus: uncharacterized protein (144 aa).

A coiled-coil region spans residues 48–119 (ELNKLKAKAD…KETEEPKMEL (72 aa)).

This is an uncharacterized protein from Archaeoglobus fulgidus (strain ATCC 49558 / DSM 4304 / JCM 9628 / NBRC 100126 / VC-16).